An 83-amino-acid polypeptide reads, in one-letter code: Protein CASPARIAN STRIP INTEGRITY FACTOR 2 (83 aa).

An N-terminal signal peptide occupies residues 1–28 (MGLLPLVKKLGFIIFLLVSASAFALCSA). The interval 61–83 (SRDYGHSSPKPKLVRPPFKLIPN) is disordered. Tyrosine 64 is subject to Sulfotyrosine. A hydroxyproline mark is found at proline 69 and proline 71.

As to quaternary structure, interacts with the specific receptor kinases GSO1 and GSO2. Expressed exclusively in the root stele.

Functionally, peptide hormone required for contiguous Casparian strip diffusion barrier formation in roots via the regulation of CASPs protein expression and distribution in a GSO1-GSO2 signaling pathway. The Casparian strip is required for ion homeostasis (e.g. iron and potassium ions). This Arabidopsis thaliana (Mouse-ear cress) protein is Protein CASPARIAN STRIP INTEGRITY FACTOR 2.